Reading from the N-terminus, the 419-residue chain is Carbohydrate sulfotransferase 12 (419 aa).

Residues 1–5 (MTKPR) are Cytoplasmic-facing. A helical; Signal-anchor for type II membrane protein transmembrane segment spans residues 6–26 (LFRLWLVLGSALMILLIIVYW). At 27-419 (DNVGTAHFYL…YPKPENLLRD (393 aa)) the chain is on the lumenal side. A compositionally biased stretch (basic and acidic residues) spans 78-87 (HNDLSRRKTE). Residues 78-99 (HNDLSRRKTEQPPVPAPSKPVL) are disordered. N-linked (GlcNAc...) asparagine glycosylation is present at N139. 176–182 (PKVACTN) contacts 3'-phosphoadenylyl sulfate. N214 is a glycosylation site (N-linked (GlcNAc...) asparagine). 250–258 (RDPFVRLIS) lines the 3'-phosphoadenylyl sulfate pocket. N-linked (GlcNAc...) asparagine glycans are attached at residues N285 and N375.

This sequence belongs to the sulfotransferase 2 family.

It localises to the golgi apparatus membrane. The enzyme catalyses chondroitin beta-D-glucuronate + n 3'-phosphoadenylyl sulfate = chondroitin 4'-sulfate + n adenosine 3',5'-bisphosphate + n H(+). In terms of biological role, catalyzes the transfer of sulfate to position 4 of the N-acetylgalactosamine (GalNAc) residue of chondroitin and desulfated dermatan sulfate. Chondroitin sulfate constitutes the predominant proteoglycan present in cartilage and is distributed on the surfaces of many cells and extracellular matrices. Activity toward partially desulfated dermatan sulfate is however lower. Does not form 4, 6-di-O-sulfated GalNAc when chondroitin sulfate C is used as an acceptor. This is Carbohydrate sulfotransferase 12 (Chst12) from Mus musculus (Mouse).